The chain runs to 347 residues: MLTKEFNFDLPEELIAQSPSEKRGGDRLLILDKQSGKLEDRLFTELPEILPKNALMVFNNSKVRHARIYAKSKTNAVCEFLMINPMRDSDGSLWQVMAKKAKRQKPGKTFLFEDGTEAEIIESEIPLESEFRCMKFNRVIDDEWLDKYGHMPLPPYIHRKDTQEDADRYQTVYAEIYGSIAAPTAGLHFTQEVLSKIRDKGIDIEYVTLHVGLGTFLPVRAEKIEDHKMHTEHFFISEKTAQAVEKAKKEGRPIIAVGTTTVRTLESAWDEKRKELKWGNQSTDIFIYPSYKFKLIDKLFTNFHTPESSLVMLVSALAGKENIFKAYRHAVEEKYKFFSYGDAMLIL.

It belongs to the QueA family. As to quaternary structure, monomer.

The protein localises to the cytoplasm. It carries out the reaction 7-aminomethyl-7-carbaguanosine(34) in tRNA + S-adenosyl-L-methionine = epoxyqueuosine(34) in tRNA + adenine + L-methionine + 2 H(+). The protein operates within tRNA modification; tRNA-queuosine biosynthesis. Functionally, transfers and isomerizes the ribose moiety from AdoMet to the 7-aminomethyl group of 7-deazaguanine (preQ1-tRNA) to give epoxyqueuosine (oQ-tRNA). This is S-adenosylmethionine:tRNA ribosyltransferase-isomerase from Treponema denticola (strain ATCC 35405 / DSM 14222 / CIP 103919 / JCM 8153 / KCTC 15104).